Consider the following 100-residue polypeptide: Small ribosomal subunit protein uS14c (100 aa).

It belongs to the universal ribosomal protein uS14 family. In terms of assembly, part of the 30S ribosomal subunit.

It is found in the plastid. Its subcellular location is the chloroplast. Functionally, binds 16S rRNA, required for the assembly of 30S particles. This chain is Small ribosomal subunit protein uS14c, found in Psilotum nudum (Whisk fern).